The following is a 169-amino-acid chain: uncharacterized protein (169 aa).

This is an uncharacterized protein from Autographa californica nuclear polyhedrosis virus (AcMNPV).